A 149-amino-acid polypeptide reads, in one-letter code: Nucleoside diphosphate kinase (149 aa).

ATP contacts are provided by K9, F57, R85, T91, R102, and N112. H115 functions as the Pros-phosphohistidine intermediate in the catalytic mechanism.

This sequence belongs to the NDK family. Homotetramer. It depends on Mg(2+) as a cofactor.

It localises to the cytoplasm. The enzyme catalyses a 2'-deoxyribonucleoside 5'-diphosphate + ATP = a 2'-deoxyribonucleoside 5'-triphosphate + ADP. It carries out the reaction a ribonucleoside 5'-diphosphate + ATP = a ribonucleoside 5'-triphosphate + ADP. In terms of biological role, major role in the synthesis of nucleoside triphosphates other than ATP. The ATP gamma phosphate is transferred to the NDP beta phosphate via a ping-pong mechanism, using a phosphorylated active-site intermediate. The sequence is that of Nucleoside diphosphate kinase from Desulfitobacterium hafniense (strain Y51).